The chain runs to 142 residues: Large ribosomal subunit protein bL17 (142 aa).

Belongs to the bacterial ribosomal protein bL17 family. As to quaternary structure, part of the 50S ribosomal subunit. Contacts protein L32.

The polypeptide is Large ribosomal subunit protein bL17 (Methylocella silvestris (strain DSM 15510 / CIP 108128 / LMG 27833 / NCIMB 13906 / BL2)).